A 100-amino-acid chain; its full sequence is MVNDRLYICYCDNGYILIDNTINPYCLLINGSTSPNTTTTIIINNTSNNNNNNNNNHMNWTIPIVIIVSIFILLIIGSISLYLYKKYCSKPKRVHYQLIR.

The helical transmembrane segment at 62–82 (IPIVIIVSIFILLIIGSISLY) threads the bilayer.

Its subcellular location is the membrane. This is an uncharacterized protein from Dictyostelium discoideum (Social amoeba).